The chain runs to 67 residues: Large ribosomal subunit protein bL35 (67 aa).

Residues 1–11 (MPKLKTRKAAA) show a composition bias toward basic residues. Residues 1 to 22 (MPKLKTRKAAAKRFEATGSGKK) are disordered.

This sequence belongs to the bacterial ribosomal protein bL35 family.

This Microcystis aeruginosa (strain NIES-843 / IAM M-2473) protein is Large ribosomal subunit protein bL35.